Reading from the N-terminus, the 354-residue chain is Holliday junction branch migration complex subunit RuvB (354 aa).

Residues 1 to 183 (MTGDNLVSAY…FGFVAHLDFY (183 aa)) form a large ATPase domain (RuvB-L) region. ATP is bound by residues Arg-23, Gly-64, Lys-67, Thr-68, Ser-69, 130–132 (EDF), Arg-173, Tyr-183, and Arg-220. A Mg(2+)-binding site is contributed by Thr-68. The tract at residues 184-254 (SPADLETLLH…AARAALLVYD (71 aa)) is small ATPAse domain (RuvB-S). Residues 257–354 (ALGLDRLDRQ…DLFSVEPDQP (98 aa)) are head domain (RuvB-H). Residues Arg-312 and Arg-317 each contribute to the DNA site. The tract at residues 330-354 (TPPNGIFGSDAPPASDLFSVEPDQP) is disordered.

This sequence belongs to the RuvB family. Homohexamer. Forms an RuvA(8)-RuvB(12)-Holliday junction (HJ) complex. HJ DNA is sandwiched between 2 RuvA tetramers; dsDNA enters through RuvA and exits via RuvB. An RuvB hexamer assembles on each DNA strand where it exits the tetramer. Each RuvB hexamer is contacted by two RuvA subunits (via domain III) on 2 adjacent RuvB subunits; this complex drives branch migration. In the full resolvosome a probable DNA-RuvA(4)-RuvB(12)-RuvC(2) complex forms which resolves the HJ.

The protein resides in the cytoplasm. It carries out the reaction ATP + H2O = ADP + phosphate + H(+). Functionally, the RuvA-RuvB-RuvC complex processes Holliday junction (HJ) DNA during genetic recombination and DNA repair, while the RuvA-RuvB complex plays an important role in the rescue of blocked DNA replication forks via replication fork reversal (RFR). RuvA specifically binds to HJ cruciform DNA, conferring on it an open structure. The RuvB hexamer acts as an ATP-dependent pump, pulling dsDNA into and through the RuvAB complex. RuvB forms 2 homohexamers on either side of HJ DNA bound by 1 or 2 RuvA tetramers; 4 subunits per hexamer contact DNA at a time. Coordinated motions by a converter formed by DNA-disengaged RuvB subunits stimulates ATP hydrolysis and nucleotide exchange. Immobilization of the converter enables RuvB to convert the ATP-contained energy into a lever motion, pulling 2 nucleotides of DNA out of the RuvA tetramer per ATP hydrolyzed, thus driving DNA branch migration. The RuvB motors rotate together with the DNA substrate, which together with the progressing nucleotide cycle form the mechanistic basis for DNA recombination by continuous HJ branch migration. Branch migration allows RuvC to scan DNA until it finds its consensus sequence, where it cleaves and resolves cruciform DNA. This is Holliday junction branch migration complex subunit RuvB from Salinispora arenicola (strain CNS-205).